The chain runs to 143 residues: 18.1 kDa class I heat shock protein (143 aa).

One can recognise a sHSP domain in the interval 29–143 (ENSAFVSTRI…PEVKSIEISS (115 aa)).

Belongs to the small heat shock protein (HSP20) family. Forms oligomeric structures.

It is found in the cytoplasm. The protein is 18.1 kDa class I heat shock protein (HSP18.1) of Medicago sativa (Alfalfa).